A 137-amino-acid polypeptide reads, in one-letter code: Small ribosomal subunit protein uS11 (137 aa).

Low complexity predominate over residues 1 to 11 (MAKQAKAGAAR). The interval 1-32 (MAKQAKAGAARRPQRGRRRERKNVPRGQAHVQ) is disordered. Residues 12 to 21 (RPQRGRRRER) show a composition bias toward basic residues.

This sequence belongs to the universal ribosomal protein uS11 family. As to quaternary structure, part of the 30S ribosomal subunit. Interacts with proteins S7 and S18. Binds to IF-3.

Functionally, located on the platform of the 30S subunit, it bridges several disparate RNA helices of the 16S rRNA. Forms part of the Shine-Dalgarno cleft in the 70S ribosome. In Herpetosiphon aurantiacus (strain ATCC 23779 / DSM 785 / 114-95), this protein is Small ribosomal subunit protein uS11.